The following is a 1072-amino-acid chain: Carbamoyl phosphate synthase large chain (1072 aa).

A carboxyphosphate synthetic domain region spans residues 1–401 (MPKRLDINTI…SLLKAVRSLE (401 aa)). Residues R129, R169, G175, G176, K208, I210, E215, G241, V242, H243, Q284, and E298 each contribute to the ATP site. An ATP-grasp 1 domain is found at 133 to 327 (RTLMQELNEP…IAKLAAKIAV (195 aa)). Positions 284, 298, and 300 each coordinate Mg(2+). Q284, E298, and N300 together coordinate Mn(2+). The oligomerization domain stretch occupies residues 402–546 (LGIYHLELDH…YSTYADENES (145 aa)). The carbamoyl phosphate synthetic domain stretch occupies residues 547 to 929 (IVTDRKSVVV…ALYKGLVASG (383 aa)). One can recognise an ATP-grasp 2 domain in the interval 671–861 (EAALTKLGIP…MANVATKVIL (191 aa)). Positions 707, 746, 752, 777, 778, 779, 780, 820, and 832 each coordinate ATP. Residues Q820, E832, and N834 each coordinate Mg(2+). Mn(2+) contacts are provided by Q820, E832, and N834. An MGS-like domain is found at 930-1072 (INIPTHGSVI…QTKRHEVVHA (143 aa)). Residues 930–1072 (INIPTHGSVI…QTKRHEVVHA (143 aa)) are allosteric domain.

This sequence belongs to the CarB family. As to quaternary structure, composed of two chains; the small (or glutamine) chain promotes the hydrolysis of glutamine to ammonia, which is used by the large (or ammonia) chain to synthesize carbamoyl phosphate. Tetramer of heterodimers (alpha,beta)4. The cofactor is Mg(2+). Mn(2+) is required as a cofactor.

It carries out the reaction hydrogencarbonate + L-glutamine + 2 ATP + H2O = carbamoyl phosphate + L-glutamate + 2 ADP + phosphate + 2 H(+). The enzyme catalyses hydrogencarbonate + NH4(+) + 2 ATP = carbamoyl phosphate + 2 ADP + phosphate + 2 H(+). It participates in amino-acid biosynthesis; L-arginine biosynthesis; carbamoyl phosphate from bicarbonate: step 1/1. Its pathway is pyrimidine metabolism; UMP biosynthesis via de novo pathway; (S)-dihydroorotate from bicarbonate: step 1/3. Large subunit of the glutamine-dependent carbamoyl phosphate synthetase (CPSase). CPSase catalyzes the formation of carbamoyl phosphate from the ammonia moiety of glutamine, carbonate, and phosphate donated by ATP, constituting the first step of 2 biosynthetic pathways, one leading to arginine and/or urea and the other to pyrimidine nucleotides. The large subunit (synthetase) binds the substrates ammonia (free or transferred from glutamine from the small subunit), hydrogencarbonate and ATP and carries out an ATP-coupled ligase reaction, activating hydrogencarbonate by forming carboxy phosphate which reacts with ammonia to form carbamoyl phosphate. The sequence is that of Carbamoyl phosphate synthase large chain from Bacillus thuringiensis subsp. konkukian (strain 97-27).